The primary structure comprises 61 residues: Photosystem II reaction center protein K (61 aa).

The propeptide occupies 1-24 (MLNIFSLICICLNSALHSSSFFFA). The helical transmembrane segment at 32–52 (FFNPIVDFMPVIPVLFFLLAL) threads the bilayer.

This sequence belongs to the PsbK family. In terms of assembly, PSII is composed of 1 copy each of membrane proteins PsbA, PsbB, PsbC, PsbD, PsbE, PsbF, PsbH, PsbI, PsbJ, PsbK, PsbL, PsbM, PsbT, PsbX, PsbY, PsbZ, Psb30/Ycf12, at least 3 peripheral proteins of the oxygen-evolving complex and a large number of cofactors. It forms dimeric complexes.

It is found in the plastid. The protein resides in the chloroplast thylakoid membrane. Functionally, one of the components of the core complex of photosystem II (PSII). PSII is a light-driven water:plastoquinone oxidoreductase that uses light energy to abstract electrons from H(2)O, generating O(2) and a proton gradient subsequently used for ATP formation. It consists of a core antenna complex that captures photons, and an electron transfer chain that converts photonic excitation into a charge separation. This is Photosystem II reaction center protein K from Drimys granadensis.